A 336-amino-acid chain; its full sequence is Ribose-phosphate pyrophosphokinase (336 aa).

ATP contacts are provided by residues 43–45 (DQE) and 102–103 (RQ). His136 and Asp178 together coordinate Mg(2+). Lys201 is an active-site residue. D-ribose 5-phosphate-binding positions include Arg203, Asp227, and 231-235 (DTAGT).

This sequence belongs to the ribose-phosphate pyrophosphokinase family. Class I subfamily. In terms of assembly, homohexamer. Requires Mg(2+) as cofactor.

Its subcellular location is the cytoplasm. The enzyme catalyses D-ribose 5-phosphate + ATP = 5-phospho-alpha-D-ribose 1-diphosphate + AMP + H(+). It functions in the pathway metabolic intermediate biosynthesis; 5-phospho-alpha-D-ribose 1-diphosphate biosynthesis; 5-phospho-alpha-D-ribose 1-diphosphate from D-ribose 5-phosphate (route I): step 1/1. Its function is as follows. Involved in the biosynthesis of the central metabolite phospho-alpha-D-ribosyl-1-pyrophosphate (PRPP) via the transfer of pyrophosphoryl group from ATP to 1-hydroxyl of ribose-5-phosphate (Rib-5-P). In Cereibacter sphaeroides (strain KD131 / KCTC 12085) (Rhodobacter sphaeroides), this protein is Ribose-phosphate pyrophosphokinase.